A 533-amino-acid chain; its full sequence is Metal transporter nramp1 homolog (533 aa).

The disordered stretch occupies residues 1–33 (MTPRIESEESAPLVNKNNNNNNDNNNNNNVDEE). Residues 1 to 68 (MTPRIESEES…PNIDKPDSKW (68 aa)) lie on the Cytoplasmic side of the membrane. Low complexity predominate over residues 14-29 (VNKNNNNNNDNNNNNN). A helical membrane pass occupies residues 69–89 (INFKTLWAFTGPGFLMSIAYL). The Extracellular portion of the chain corresponds to 90–101 (DPGNLESDIQAG). The helical transmembrane segment at 102–122 (AMAGYQLLWVLFWSTVIGFWL) threads the bilayer. Over 123 to 158 (QMLASRLGVVTGKHLAEHCREQYPKTPRLLLWLMTE) the chain is Cytoplasmic. The chain crosses the membrane as a helical span at residues 159–179 (LAIIGSDIQEVIGTAIALQIL). At 180-182 (SNG) the chain is on the extracellular side. A helical transmembrane segment spans residues 183–203 (HIPLWAGVLFTAADTFTFLFL). The Cytoplasmic portion of the chain corresponds to 204-212 (EKYGIRKLE). The helical transmembrane segment at 213–233 (AFFCSLIAIMAISFGVEYIIS) threads the bilayer. Residues 234 to 256 (KPDQIEVVKGVFIPLCSQNNISQ) lie on the Extracellular side of the membrane. Asn253 carries N-linked (GlcNAc...) asparagine glycosylation. The chain crosses the membrane as a helical span at residues 257–277 (AVGILGAVVMPHNIYLHSALV). At 278-302 (QSREIDRKSETQVKIANKYNRLESA) the chain is on the cytoplasmic side. Residues 303 to 323 (FALIISFIINLLLVSVFAKGF) form a helical membrane-spanning segment. Over 324-348 (YGETTEIGLSSAADFLMDKYGKVAK) the chain is Extracellular. A helical membrane pass occupies residues 349-368 (YIWAIGLFSAGQCSTMTGTY). Residues 369–387 (SGQFVMEGFLKLKIAPWKR) lie on the Cytoplasmic side of the membrane. A helical transmembrane segment spans residues 388-408 (LLITRCTAIVPAMVVAILSTS). Topologically, residues 409–415 (HLDSLDQ) are extracellular. A helical membrane pass occupies residues 416-436 (WLNILQSIQLPFAVVPVLLFT). Topologically, residues 437–457 (SSEKIMGSKFKNHWLNNQFVR) are cytoplasmic. A helical membrane pass occupies residues 458–478 (FLSLLIIAINIYLIITFSMQI). The Extracellular segment spans residues 479–481 (SES). The helical transmembrane segment at 482 to 502 (AWMISIVSISFFFYFIFIVYL) threads the bilayer. The Cytoplasmic portion of the chain corresponds to 503–533 (SMGQENFNSMTKKIKNLFNNNSNQTYNNINY).

It belongs to the NRAMP family.

It localises to the membrane. Its function is as follows. Depletes iron from the phagolysosome in an ATP-dependent process. May rather act as a symporter of protons and metal cations in an ATP-dependent process. Nramp1 overexpression protected cells from L.pneumophila infection. This chain is Metal transporter nramp1 homolog (nramp1), found in Dictyostelium discoideum (Social amoeba).